Here is a 72-residue protein sequence, read N- to C-terminus: DNA-directed RNA polymerase subunit omega (72 aa).

It belongs to the RNA polymerase subunit omega family. As to quaternary structure, the RNAP catalytic core consists of 2 alpha, 1 beta, 1 beta' and 1 omega subunit. When a sigma factor is associated with the core the holoenzyme is formed, which can initiate transcription.

It catalyses the reaction RNA(n) + a ribonucleoside 5'-triphosphate = RNA(n+1) + diphosphate. Functionally, promotes RNA polymerase assembly. Latches the N- and C-terminal regions of the beta' subunit thereby facilitating its interaction with the beta and alpha subunits. The chain is DNA-directed RNA polymerase subunit omega from Clostridium acetobutylicum (strain ATCC 824 / DSM 792 / JCM 1419 / IAM 19013 / LMG 5710 / NBRC 13948 / NRRL B-527 / VKM B-1787 / 2291 / W).